Consider the following 613-residue polypeptide: UvrABC system protein C (613 aa).

One can recognise a GIY-YIG domain in the interval 20–98 (ERPGVYLMYD…IKRHKPRYNI (79 aa)). Residues 209 to 244 (FDVIESLGHKMQQASDEFEFEKAALYRDKISALRAI) form the UVR domain.

This sequence belongs to the UvrC family. In terms of assembly, interacts with UvrB in an incision complex.

The protein localises to the cytoplasm. Its function is as follows. The UvrABC repair system catalyzes the recognition and processing of DNA lesions. UvrC both incises the 5' and 3' sides of the lesion. The N-terminal half is responsible for the 3' incision and the C-terminal half is responsible for the 5' incision. The chain is UvrABC system protein C from Hydrogenovibrio crunogenus (strain DSM 25203 / XCL-2) (Thiomicrospira crunogena).